Reading from the N-terminus, the 101-residue chain is TrfB transcriptional repressor protein (101 aa).

Positions 37-56 (QATFATSLGLTRGAVSQAVH) form a DNA-binding region, H-T-H motif.

In terms of biological role, in conjunction with KorB, inhibits the transcription of kilA, trfA and korAB operons. In conjunction with KorC is responsible for the negative control of kilC and kilE operons. This Escherichia coli protein is TrfB transcriptional repressor protein (trfB).